A 40-amino-acid polypeptide reads, in one-letter code: Protamine-1 (40 aa).

The segment at Met-1 to His-40 is disordered.

As to expression, testis.

It localises to the nucleus. The protein resides in the chromosome. Protamines substitute for histones in the chromatin of sperm during the haploid phase of spermatogenesis. They compact sperm DNA into a highly condensed, stable and inactive complex. This chain is Protamine-1 (PBP1), found in Bufo japonicus (Japanese common toad).